Here is a 383-residue protein sequence, read N- to C-terminus: MQFTLHKTAAGESRARRGTVTVNHGEIRTPAFMPVGTYGTVKGMLPRDIEDIGADIILGNTFHLWLRPGTEVIDKFGGLHQFMNWNKPILTDSGGFQVFSLGAMRKITEEGVAFKSPIDGAKVFLSPEKSMQIQYSLNSDIVMQFDECTPYPATYSEAQKSLELSLRWGQRCVDEHKKLGNTNALFGIVQGSMYEDLRRQSMDGLLEIGFDGYAIGGLSVGEPKEEMISVLNYMPELMPADKPRYLMGVGKPEDILEAVRRGVDMFDCVMPTRNARNGHYFVTGNEDNQGIVRIRNSQYREDQGPLDPECDCYCCQNFSRAYLYHLNKCKEMLGAQLATIHNLRYYQRLMQGIRDAIDEDRFDEFVADFYHRRGQDVPPLELK.

The Proton acceptor role is filled by aspartate 92. Substrate contacts are provided by residues 92-96 (DSGGF), aspartate 146, glutamine 190, and glycine 217. The RNA binding stretch occupies residues 248-254 (GVGKPED). The active-site Nucleophile is aspartate 267. Positions 272 to 276 (TRNAR) are RNA binding; important for wobble base 34 recognition. The Zn(2+) site is built by cysteine 310, cysteine 312, cysteine 315, and histidine 341.

This sequence belongs to the queuine tRNA-ribosyltransferase family. As to quaternary structure, homodimer. Within each dimer, one monomer is responsible for RNA recognition and catalysis, while the other monomer binds to the replacement base PreQ1. Requires Zn(2+) as cofactor.

The enzyme catalyses 7-aminomethyl-7-carbaguanine + guanosine(34) in tRNA = 7-aminomethyl-7-carbaguanosine(34) in tRNA + guanine. Its pathway is tRNA modification; tRNA-queuosine biosynthesis. In terms of biological role, catalyzes the base-exchange of a guanine (G) residue with the queuine precursor 7-aminomethyl-7-deazaguanine (PreQ1) at position 34 (anticodon wobble position) in tRNAs with GU(N) anticodons (tRNA-Asp, -Asn, -His and -Tyr). Catalysis occurs through a double-displacement mechanism. The nucleophile active site attacks the C1' of nucleotide 34 to detach the guanine base from the RNA, forming a covalent enzyme-RNA intermediate. The proton acceptor active site deprotonates the incoming PreQ1, allowing a nucleophilic attack on the C1' of the ribose to form the product. After dissociation, two additional enzymatic reactions on the tRNA convert PreQ1 to queuine (Q), resulting in the hypermodified nucleoside queuosine (7-(((4,5-cis-dihydroxy-2-cyclopenten-1-yl)amino)methyl)-7-deazaguanosine). The chain is Queuine tRNA-ribosyltransferase from Psychrobacter sp. (strain PRwf-1).